The chain runs to 272 residues: MTSSSSNRQFLHRTANTFLTYPQCPEHPEIISQRIWDLVGRWNPLYIICAQEAHEDGNMHLHALIQTDKQVRTTDSRFFDIDGFHPNIQSAMSPNKVRDYILKEPLALFERGTFVPRKKTFLGNSSKGNSEKKPSKDEIMQDIISHATSKPEYLSMVRKSFPYDWATKLQYFEYSANKLFPDIQEEFINPHPTSEPDLLCNESIKDWLQPNIYQVSPQAYMLLQPNCYTVDDAISDLQWLDDLTSKQIMDQESRASTSSVQQGQENLLGPEA.

Residues 11–114 (LHRTANTFLT…PLALFERGTF (104 aa)) form the CRESS-DNA virus Rep endonuclease domain. Residues 18–21 (FLTY) carry the RCR-1 motif. A divalent metal cation-binding residues include Glu-52, His-60, and His-62. The short motif at 60 to 62 (HLH) is the RCR-2 element. The active-site For DNA cleavage activity is Tyr-100. The short motif at 100-103 (YILK) is the RCR-3 element. Position 104 (Glu-104) interacts with a divalent metal cation. The tract at residues 175-187 (SANKLFPDIQEEF) is oligomerization. The binding to RBR1 stretch occupies residues 198 to 202 (LLCNE). The segment at 221-230 (MLLQPNCYTV) is transactivation. Residues 250 to 265 (DQESRASTSSVQQGQE) show a composition bias toward polar residues. The tract at residues 250–272 (DQESRASTSSVQQGQENLLGPEA) is disordered.

This sequence belongs to the geminiviridae Rep protein family. In terms of assembly, homooligomer. Interacts with host retinoblastoma-related protein 1 (RBR1), and may thereby deregulate the host cell cycle. Part of the C- and V-complexes which are RepA-Rep-DNA complexes involved in the c-sense and v-sense transcription. Requires Mg(2+) as cofactor. Mn(2+) is required as a cofactor.

The protein localises to the host nucleus. It localises to the host cytoplasm. Implicated in enhancement of V-sense gene expression. Acts a an inhibitor of C-sense gene transcription. This chain is Replication-associated protein A, found in Avena sativa (Oat).